Consider the following 178-residue polypeptide: Ribosome maturation factor RimM (178 aa).

The PRC barrel domain maps to A101–F178.

It belongs to the RimM family. Binds ribosomal protein uS19.

The protein localises to the cytoplasm. An accessory protein needed during the final step in the assembly of 30S ribosomal subunit, possibly for assembly of the head region. Essential for efficient processing of 16S rRNA. May be needed both before and after RbfA during the maturation of 16S rRNA. It has affinity for free ribosomal 30S subunits but not for 70S ribosomes. In Pseudomonas fluorescens (strain Pf0-1), this protein is Ribosome maturation factor RimM.